The sequence spans 348 residues: LRP2-binding protein (348 aa).

A TPR repeat occupies 60–93 (TLAYFLRGQLYFEEGWYEEALEQFEEIEEKDHQA). 6 Sel1-like repeats span residues 94–126 (TYQLGVMYYDGLGTILNSEKGVDYMKKILDSPC), 134–169 (FAAAYNLGRAYYEGKGVKRSNEEAERLWLFAADNGN), 174–207 (VKAQSMLGLYYSTKEPKELEKAFYWHSEACGNGN), 208–243 (LESQGALGLMYLYGQGIRQDTEAALHCLREAAERGN), 244–278 (VYAQGNLVEYYYKMKFFTKCVAFSKRIADYDEVHD), and 298–333 (AMASFYHARCLQLGLGITRDEATAKHYYSKACRLNP).

Interacts with LRP2.

It is found in the cytoplasm. In terms of biological role, may act as an adapter that regulates LRP2 function. In Macaca fascicularis (Crab-eating macaque), this protein is LRP2-binding protein (LRP2BP).